We begin with the raw amino-acid sequence, 195 residues long: NADH-quinone oxidoreductase subunit I (195 aa).

4Fe-4S ferredoxin-type domains lie at 44–74 (LNRY…VEGA) and 90–119 (QVYQ…MTNE). Positions 54, 57, 60, 64, 99, 102, 105, and 109 each coordinate [4Fe-4S] cluster. The segment at 145 to 195 (MTAPPHALRPGTTQDDYYRGDITAVPEQAAPEQAAPEQPAPEREPNPETEK) is disordered. The span at 168-181 (AVPEQAAPEQAAPE) shows a compositional bias: low complexity. Residues 184-195 (APEREPNPETEK) are compositionally biased toward basic and acidic residues.

This sequence belongs to the complex I 23 kDa subunit family. In terms of assembly, NDH-1 is composed of 14 different subunits. Subunits NuoA, H, J, K, L, M, N constitute the membrane sector of the complex. [4Fe-4S] cluster is required as a cofactor.

The protein localises to the cell membrane. The enzyme catalyses a quinone + NADH + 5 H(+)(in) = a quinol + NAD(+) + 4 H(+)(out). Functionally, NDH-1 shuttles electrons from NADH, via FMN and iron-sulfur (Fe-S) centers, to quinones in the respiratory chain. The immediate electron acceptor for the enzyme in this species is believed to be ubiquinone. Couples the redox reaction to proton translocation (for every two electrons transferred, four hydrogen ions are translocated across the cytoplasmic membrane), and thus conserves the redox energy in a proton gradient. The chain is NADH-quinone oxidoreductase subunit I from Rhodococcus erythropolis (strain PR4 / NBRC 100887).